The chain runs to 74 residues: Omega-filistatoxin-Kh1a (74 aa).

Post-translationally, contains 6 disulfide bonds. In terms of tissue distribution, expressed by the venom gland.

Its subcellular location is the secreted. Potently blocks vertebrate calcium channels Cav1 and Cav2. Is the most active on Cav2.2/CACNA1B (from HEK) (IC(50)=2.3 nM), followed by Cav2.1/CACNA1A (IC(50)=4.3 nM), Cav2.2/CACNA1B (from oocyte) (IC(50)=14.4 nM), Cav1.2/CACNA1C (IC(50)=26.8 nM), and Cav2.3/CACNA1E (IC(50)=96.4 nM). This Kukulcania hibernalis (Southern house spider) protein is Omega-filistatoxin-Kh1a.